A 276-amino-acid chain; its full sequence is Octanoyltransferase LipM (276 aa).

The region spanning 33 to 247 (GELKPTLRFY…GFKDAFSLTF (215 aa)) is the BPL/LPL catalytic domain. The active-site Acyl-thioester intermediate is the cysteine 150.

The protein belongs to the octanoyltransferase LipM family. Monomer.

It carries out the reaction octanoyl-[ACP] + L-lysyl-[protein] = N(6)-octanoyl-L-lysyl-[protein] + holo-[ACP] + H(+). It participates in protein modification; protein lipoylation via endogenous pathway; protein N(6)-(lipoyl)lysine from octanoyl-[acyl-carrier-protein]. Catalyzes the transfer of endogenously produced octanoic acid from octanoyl-acyl-carrier-protein onto the lipoyl domain of GcvH, an intermediate carrier during protein lipoylation. This chain is Octanoyltransferase LipM, found in Exiguobacterium sp. (strain ATCC BAA-1283 / AT1b).